The primary structure comprises 545 residues: Chaperonin GroEL 1 (545 aa).

ATP contacts are provided by residues 30–33 (TLGP), Lys-51, 87–91 (DGTTT), Gly-415, and Asp-495.

Belongs to the chaperonin (HSP60) family. Forms a cylinder of 14 subunits composed of two heptameric rings stacked back-to-back. Interacts with the co-chaperonin GroES.

It localises to the cytoplasm. The catalysed reaction is ATP + H2O + a folded polypeptide = ADP + phosphate + an unfolded polypeptide.. In terms of biological role, together with its co-chaperonin GroES, plays an essential role in assisting protein folding. The GroEL-GroES system forms a nano-cage that allows encapsulation of the non-native substrate proteins and provides a physical environment optimized to promote and accelerate protein folding. This is Chaperonin GroEL 1 from Sinorhizobium medicae (strain WSM419) (Ensifer medicae).